A 2919-amino-acid chain; its full sequence is Cadherin EGF LAG seven-pass G-type receptor 2 (2919 aa).

The first 31 residues, 1–31 (MRSRAASAPLPTPLLPLLLLLLLLPPSPLLG), serve as a signal peptide directing secretion. Residues 32–2380 (DQVGPCRSLG…GEILPLKTLT (2349 aa)) lie on the Extracellular side of the membrane. The disordered stretch occupies residues 156–194 (LRAGEGSPEESLGGRRKRNVNTAPQFQPPSYQATVPENQ). Over residues 175-194 (VNTAPQFQPPSYQATVPENQ) the composition is skewed to polar residues. 9 Cadherin domains span residues 182-289 (QPPS…DPVF), 290-399 (EQQE…APQF), 400-505 (SEKR…APIF), 506-610 (VSTP…NPTF), 611-712 (TQPE…RPVF), 713-815 (QSSH…APQF), 816-921 (LRDS…PPVF), 922-1023 (EQDE…PPVL), and 1028-1146 (ILFN…SPLL). N-linked (GlcNAc...) asparagine glycans are attached at residues N486, N557, and N701. N-linked (GlcNAc...) asparagine glycosylation is found at N1036, N1076, N1182, and N1212. In terms of domain architecture, EGF-like 1; atypical spans 1228-1286 (DDNICLREPCENYMRCVSVLRFDSSAPFIASSSVLFRPIHPVGGLRCRCPPGFTGDYCE). One can recognise an EGF-like 2; calcium-binding domain in the interval 1288–1318 (EVDLCYSRPCGPHGRCRSREGGYTCLCLDGY). 6 cysteine pairs are disulfide-bonded: C1292–C1303, C1297–C1312, C1314–C1323, C1332–C1343, C1337–C1353, and C1355–C1365. In terms of domain architecture, EGF-like 3; calcium-binding spans 1328-1366 (HSGRCTPGVCKNGGTCVNLLVGGFKCDCPSGDFEKPFCQ). The region spanning 1367–1571 (VTTRSFPARS…IANNGTVPGC (205 aa)) is the Laminin G-like 1 domain. N-linked (GlcNAc...) asparagine glycosylation is found at N1501 and N1565. 4 disulfide bridges follow: C1545-C1571, C1578-C1589, C1583-C1598, and C1600-C1609. One can recognise an EGF-like 4; calcium-binding domain in the interval 1574–1610 (KKIVCDSSICHNGGTCVNQWNAFSCECPLGFGGKSCA). N1591 carries the post-translational modification (3R)-3-hydroxyasparagine. Residues 1614–1791 (ANPQRFLGSS…GESINVEPGC (178 aa)) enclose the Laminin G-like 2 domain. The N-linked (GlcNAc...) asparagine glycan is linked to N1741. The EGF-like 5; calcium-binding domain maps to 1787 to 1829 (VEPGCSWPDPCDSNPCPTNSYCSNDWDSYSCSCVLGYYGDNCT). 13 cysteine pairs are disulfide-bonded: C1791–C1802, C1797–C1817, C1819–C1828, C1832–C1843, C1837–C1855, C1857–C1866, C1887–C1899, C1889–C1906, C1908–C1921, C1924–C1936, C1926–C1943, C1945–C1954, and C1957–C1969. The N-linked (GlcNAc...) asparagine glycan is linked to N1827. One can recognise an EGF-like 6; calcium-binding domain in the interval 1830-1867 (NVCDLNPCEHQSVCTRKPNTPHGYICECLPNYLGPYCE). Residues 1883–1922 (TCGPCNCDVSKGFDPDCNKTSGECHCKENHYRPPGSPTCL) enclose the EGF-like 7; calcium-binding domain. N1900 carries N-linked (GlcNAc...) asparagine glycosylation. Residues 1924–1971 (CDCYPTGSLSRVCDPEDGQCPCKPGVIGRQCDRCDNPFAEVTTNGCEV) form the Laminin EGF-like domain. Residues N2024, N2043, and N2061 are each glycosylated (N-linked (GlcNAc...) asparagine). The 171-residue stretch at 2199 to 2369 (ETTVILPESV…AVLMDMSRRE (171 aa)) folds into the GAIN-B domain. The segment at 2216 to 2241 (VRSAGPGEAQETEELARRQRRHPELS) is disordered. 2 disulfides stabilise this stretch: C2319-C2351 and C2339-C2353. The GPS stretch occupies residues 2319–2369 (CVFWNHSILVSGTGGWSARGCEVVFRNESHVSCQCNHMTSFAVLMDMSRRE). 2 N-linked (GlcNAc...) asparagine glycosylation sites follow: N2323 and N2345. A helical membrane pass occupies residues 2381 to 2401 (YVALGVTLAALMLTFLFLTLL). Topologically, residues 2402–2413 (RALRSNQHGIRR) are cytoplasmic. The helical transmembrane segment at 2414–2433 (NLTAALGLAQLVFLLGINQA) threads the bilayer. The Extracellular segment spans residues 2434 to 2438 (DLPFA). Residues 2439–2459 (CTVIAILLHFLYLCTFSWALL) form a helical membrane-spanning segment. At 2460–2480 (EALHLYRALTEVRDVNASPMR) the chain is on the cytoplasmic side. The helical transmembrane segment at 2481–2501 (FYYMLGWGVPAFITGLAVGLD) threads the bilayer. Topologically, residues 2502 to 2518 (PEGYGNPDFCWLSVYDT) are extracellular. A helical transmembrane segment spans residues 2519–2539 (LIWSFAGPVAFAVSMSVFLYI). The Cytoplasmic segment spans residues 2540-2563 (LSARASCAAQRQGFEKKGPVSGLR). The helical transmembrane segment at 2564–2584 (SSFTVLLLLSATWLLALLSVN) threads the bilayer. Residues 2585 to 2591 (SDTLLFH) are Extracellular-facing. A helical membrane pass occupies residues 2592 to 2612 (YLFAACNCVQGPFIFLSYVVL). Topologically, residues 2613 to 2919 (SKEVRKALKF…SEFLFFNFLH (307 aa)) are cytoplasmic. The segment at 2690 to 2884 (LNPGQVPPGL…PPRPPPRQSL (195 aa)) is disordered. Residues 2718–2730 (TDSDSDLSLEDDQ) are compositionally biased toward acidic residues. Residues 2791–2800 (GTTTKENSGS) show a composition bias toward polar residues. Basic and acidic residues predominate over residues 2803 to 2815 (LEERPRENGDALT). Over residues 2857–2868 (GTGSSRGSSISE) the composition is skewed to low complexity.

It belongs to the G-protein coupled receptor 2 family. LN-TM7 subfamily. Heterodimer of 2 chains generated by proteolytic processing; the large extracellular N-terminal fragment and the membrane-bound C-terminal fragment predominantly remain associated and non-covalently linked. In terms of processing, the iron and 2-oxoglutarate dependent 3-hydroxylation of aspartate and asparagine is (R) stereospecific within EGF domains. Post-translationally, autoproteolytically processed at the GPS region of the GAIN-B domain; this cleavage modulates receptor activity. In terms of tissue distribution, expressed in the CNS and in the eye.

It localises to the cell membrane. Its function is as follows. Receptor that may have an important role in cell/cell signaling during nervous system formation. The sequence is that of Cadherin EGF LAG seven-pass G-type receptor 2 from Mus musculus (Mouse).